The chain runs to 184 residues: Protein GrpE (184 aa).

The segment at 1 to 35 (MTQENQNPPPEQEDVAADPQVNEAAASEPAAVKTP) is disordered.

This sequence belongs to the GrpE family. Homodimer.

It localises to the cytoplasm. Functionally, participates actively in the response to hyperosmotic and heat shock by preventing the aggregation of stress-denatured proteins, in association with DnaK and GrpE. It is the nucleotide exchange factor for DnaK and may function as a thermosensor. Unfolded proteins bind initially to DnaJ; upon interaction with the DnaJ-bound protein, DnaK hydrolyzes its bound ATP, resulting in the formation of a stable complex. GrpE releases ADP from DnaK; ATP binding to DnaK triggers the release of the substrate protein, thus completing the reaction cycle. Several rounds of ATP-dependent interactions between DnaJ, DnaK and GrpE are required for fully efficient folding. In Polynucleobacter asymbioticus (strain DSM 18221 / CIP 109841 / QLW-P1DMWA-1) (Polynucleobacter necessarius subsp. asymbioticus), this protein is Protein GrpE.